Here is a 312-residue protein sequence, read N- to C-terminus: MDIIFYHPTFDTQWWIEALHKAIPQTRVRAWKSGDNESADYALVWHPPVEMLAGRDLKAVFALGAGVDSILSKLQAHPEMLKPSVPLFRLEDTGMGEQMQEYAVSQVLHWFRRFDDYRIQQNSSHWQPLPEYHREDFTIGILGAGVLGSKVAQSLQTWRFPLRCWSRTRKSWPGVQSFAGREELSAFLSQCRVLINLLPNTPETVGIINQQLLEKLPDGAYLLNLARGVHVVEDDLLAALDSGKVKGAMLDVFNREPLPPESPLWQHPRVTITPHVAAITRPAEAVDYISRTIAQVEKGERVCGQVDRARGY.

R227 is an active-site residue. The active-site Proton donor is the H275.

It belongs to the D-isomer specific 2-hydroxyacid dehydrogenase family. GhrA subfamily.

The protein resides in the cytoplasm. It catalyses the reaction glycolate + NADP(+) = glyoxylate + NADPH + H(+). The enzyme catalyses (R)-glycerate + NAD(+) = 3-hydroxypyruvate + NADH + H(+). The catalysed reaction is (R)-glycerate + NADP(+) = 3-hydroxypyruvate + NADPH + H(+). Catalyzes the NADPH-dependent reduction of glyoxylate and hydroxypyruvate into glycolate and glycerate, respectively. The sequence is that of Glyoxylate/hydroxypyruvate reductase A from Escherichia coli O6:K15:H31 (strain 536 / UPEC).